Here is a 2631-residue protein sequence, read N- to C-terminus: Cyclic GMP-binding protein C (2631 aa).

LRR repeat units lie at residues 170 to 194 (TAQI…IFSL), 196 to 217 (WIQK…IGKL), 218 to 240 (QQLQ…IGDL), 242 to 262 (NLKR…LERL), 263 to 285 (SKLE…IASL), and 287 to 308 (SLKT…VVSK). The Roc domain maps to 323 to 515 (GARPCLRSKL…QLIEDIIKTQ (193 aa)). Residues 336-343 (GDPGVGKT), 402-406 (DIANQ), and 458-461 (THID) contribute to the GTP site. The 219-residue stretch at 523-741 (PSSFFTLEEA…ESCQKRAVIL (219 aa)) folds into the COR domain. The 295-residue stretch at 878–1172 (VKINKEVGRG…KKKFAPLPFT (295 aa)) folds into the Protein kinase domain. ATP-binding positions include 884 to 892 (VGRGAFGIV) and Lys905. Residue Asp1023 is the Proton acceptor of the active site. Residues 1225-1250 (ISLTSSGTSPTNSPVGGLLSQSLTQP) are compositionally biased toward polar residues. Disordered regions lie at residues 1225-1263 (ISLT…ILST) and 1387-1418 (SSAT…RNSV). The span at 1251 to 1263 (ITSGGSTSGILST) shows a compositional bias: low complexity. An N-terminal Ras-GEF domain is found at 1366 to 1539 (SVSIIIAATM…QIYGTLTTHE (174 aa)). Residues 1392–1404 (KSEHISTRRRSDT) show a composition bias toward basic and acidic residues. Positions 1620 to 1706 (PLLGITVKEK…SPTSFYMFLE (87 aa)) constitute a DEP domain. A Ras-GEF domain is found at 1708 to 1971 (DPELIARQYT…DLKALDSLQI (264 aa)). The disordered stretch occupies residues 1989-2013 (GTTNDDKEKGDENGGGLTSSNFFGN). Residue 2014 to 2133 (GSDELTERDW…AKFYKIMANQ (120 aa)) participates in a nucleoside 3',5'-cyclic phosphate binding. Disordered regions lie at residues 2142 to 2180 (PWSK…GGGL), 2192 to 2239 (MSLS…TTTD), and 2263 to 2346 (SANL…GQQP). Over residues 2144–2174 (SKPKNTTGGSSSSNQSAGPDNILGTTPTGIS) the composition is skewed to low complexity. A compositionally biased stretch (pro residues) spans 2212 to 2221 (LPSPPAPLQS). The span at 2222 to 2238 (PPTSGISSPTTTTSTTT) shows a compositional bias: low complexity. Basic and acidic residues predominate over residues 2287 to 2299 (TINKDPHQRDSGS). The span at 2321-2336 (GSISYLGRTQTSTSPL) shows a compositional bias: polar residues. Residues 2354–2414 (EFCQRFALVD…KNIDKLICIN (61 aa)) enclose the GRAM domain. Position 2490–2616 (2490–2616 (GDELTKEDWE…ASKWFKYLAT (127 aa))) interacts with a nucleoside 3',5'-cyclic phosphate.

It belongs to the protein kinase superfamily. TKL Ser/Thr protein kinase family. ROCO subfamily.

It catalyses the reaction L-seryl-[protein] + ATP = O-phospho-L-seryl-[protein] + ADP + H(+). The catalysed reaction is L-threonyl-[protein] + ATP = O-phospho-L-threonyl-[protein] + ADP + H(+). Its function is as follows. Promotes the exchange of Ras-bound GDP by GTP. Required for cyclic GMP-mediated chemotaxis, polarity. Plays a key role in cyclic AMP-induced myosin II translocation to the cortex. Also involved in the phosphorylation of mlkA and mlcR, either directly or via an intermediate kinase. The sequence is that of Cyclic GMP-binding protein C (gbpC) from Dictyostelium discoideum (Social amoeba).